The following is a 228-amino-acid chain: Probable septum site-determining protein MinC (228 aa).

The protein belongs to the MinC family. As to quaternary structure, interacts with MinD and FtsZ.

Its function is as follows. Cell division inhibitor that blocks the formation of polar Z ring septums. Rapidly oscillates between the poles of the cell to destabilize FtsZ filaments that have formed before they mature into polar Z rings. Prevents FtsZ polymerization. The polypeptide is Probable septum site-determining protein MinC (Yersinia enterocolitica serotype O:8 / biotype 1B (strain NCTC 13174 / 8081)).